The following is a 372-amino-acid chain: GDP-mannose 4,6 dehydratase (372 aa).

A disordered region spans residues M1–P22. At A2 the chain carries N-acetylalanine. Residues G30–D35, R55–S58, D86–L87, L108–S112, and Y123 each bind NADP(+). T155 is an active-site residue. Catalysis depends on nucleophile residues E157 and Y179. Positions 183, 209, and 214 each coordinate NADP(+). Y323 carries the post-translational modification Phosphotyrosine.

The protein belongs to the NAD(P)-dependent epimerase/dehydratase family. GDP-mannose 4,6-dehydratase subfamily. NADP(+) is required as a cofactor.

The catalysed reaction is GDP-alpha-D-mannose = GDP-4-dehydro-alpha-D-rhamnose + H2O. It participates in nucleotide-sugar biosynthesis; GDP-L-fucose biosynthesis via de novo pathway; GDP-L-fucose from GDP-alpha-D-mannose: step 1/2. Inhibited by GDP-fucose. Catalyzes the conversion of GDP-D-mannose to GDP-4-dehydro-6-deoxy-D-mannose. This Cricetulus griseus (Chinese hamster) protein is GDP-mannose 4,6 dehydratase (GMDS).